The following is a 197-amino-acid chain: Xanthine phosphoribosyltransferase (197 aa).

Xanthine-binding residues include Leu20 and Asn27. 128-132 (ANGQA) is a binding site for 5-phospho-alpha-D-ribose 1-diphosphate. Position 156 (Lys156) interacts with xanthine.

It belongs to the purine/pyrimidine phosphoribosyltransferase family. Xpt subfamily. Homodimer.

The protein resides in the cytoplasm. It catalyses the reaction XMP + diphosphate = xanthine + 5-phospho-alpha-D-ribose 1-diphosphate. Its pathway is purine metabolism; XMP biosynthesis via salvage pathway; XMP from xanthine: step 1/1. Its function is as follows. Converts the preformed base xanthine, a product of nucleic acid breakdown, to xanthosine 5'-monophosphate (XMP), so it can be reused for RNA or DNA synthesis. This Bacillus cytotoxicus (strain DSM 22905 / CIP 110041 / 391-98 / NVH 391-98) protein is Xanthine phosphoribosyltransferase.